Consider the following 243-residue polypeptide: Adenosine 5'-phosphosulfate reductase (243 aa).

Cysteine 126, cysteine 127, cysteine 209, and cysteine 212 together coordinate [4Fe-4S] cluster. The active-site Nucleophile; cysteine thiosulfonate intermediate is the cysteine 235.

Belongs to the PAPS reductase family. CysH subfamily. [4Fe-4S] cluster is required as a cofactor.

Its subcellular location is the cytoplasm. It carries out the reaction [thioredoxin]-disulfide + sulfite + AMP + 2 H(+) = adenosine 5'-phosphosulfate + [thioredoxin]-dithiol. Its pathway is sulfur metabolism; hydrogen sulfide biosynthesis; sulfite from sulfate. Functionally, catalyzes the formation of sulfite from adenosine 5'-phosphosulfate (APS) using thioredoxin as an electron donor. This Staphylococcus epidermidis (strain ATCC 35984 / DSM 28319 / BCRC 17069 / CCUG 31568 / BM 3577 / RP62A) protein is Adenosine 5'-phosphosulfate reductase.